Reading from the N-terminus, the 148-residue chain is uncharacterized protein (148 aa).

The first 23 residues, 1 to 23 (MKALVAVSAVAVVALLGVSSAQA), serve as a signal peptide directing secretion. Residues 22 to 45 (QADPEADPGAGEANYGGPPSSPRL) form a disordered region.

It to M.leprae ML2452.

This is an uncharacterized protein from Mycobacterium bovis (strain ATCC BAA-935 / AF2122/97).